Consider the following 214-residue polypeptide: Glycerol-3-phosphate acyltransferase (214 aa).

Helical transmembrane passes span 4–24, 52–72, 82–102, 118–138, and 159–179; these read LIVA…IVSA, AAIL…WFVV, ETSV…PVFF, LAIN…VAFF, and FLFG…LLVW.

It belongs to the PlsY family. In terms of assembly, probably interacts with PlsX.

It localises to the cell inner membrane. It catalyses the reaction an acyl phosphate + sn-glycerol 3-phosphate = a 1-acyl-sn-glycero-3-phosphate + phosphate. It functions in the pathway lipid metabolism; phospholipid metabolism. Functionally, catalyzes the transfer of an acyl group from acyl-phosphate (acyl-PO(4)) to glycerol-3-phosphate (G3P) to form lysophosphatidic acid (LPA). This enzyme utilizes acyl-phosphate as fatty acyl donor, but not acyl-CoA or acyl-ACP. The sequence is that of Glycerol-3-phosphate acyltransferase from Paraburkholderia phytofirmans (strain DSM 17436 / LMG 22146 / PsJN) (Burkholderia phytofirmans).